The chain runs to 936 residues: MGFWENNKDSITSGLKSAGKYGYQGTKYVAKTGYKASKKHYNNSKARRERKSGKKNSSDEEYESEDEMEHERKPTDIRSLKDPKSFPPPPLKPGQKTYTGQQQQQMPNGQASYAFQGAYQGQPGAGSMEQSQYAQPQYNQYPQQQLQQGVMPQQPPIYGEQVPPYGSNSNATSYQSLPQQNQPQYAIPSQVSLNSASQQSTGFVSQNLQYGTQSSNPAPSPSFQNGLQCHQQPQYVSHGSTNLGQSQFPSGQQQQPTTQFGQQVLPSPAQPHPQPQQQQQGQPLPPPRGQVILPAPGEPLSNGFGQQQQQPLNQNNALLPQMNVEGVSGMAAVQPVYGQAMSSTTNMQDSNPSYGASPMQGQPPVGGQPPVPVRMQPQPPQPMQQGNIYPIEPSLDSTSSTPHFEVTPFDPDAPAPKPKIDIPTVDVSSLPPPPTHRDRGAVLHQEPAPSGKIQPNTTSSAASLPAKHSRTTTADNERNSGNKENDESTSKSSILGHYDVDVNIMPPPKPFRHGLDSVPSEHTRKNASERAVPILPPRNNVEPPPPPSRGNFERTESVLSTNAANVQEDPISNFLPPPKPFRHTETKQNQNSKASPVEIKDEVLPGHPSEEDRNVEPSLLPQSKSQSQSQSQFRRAHMETQPIQNFQPPPKPFRRSQSSNSSDSSYTIDGPEANHGRGRGRIAKHHDGDEYNPKSENSTENGRLGDAPNSFIRKRAPTPPAPSGSEKLHEGAITSEVDSSKDANKYEKSIPPVTSSIQAQQSTKKAPPPVVKPKPRNFSLKANEYPKELTREATGQDEVLNSITNELSHIKLRKINVNLEKLGGSKKVKDSSPVPSDLDEKYVSASGSITPPRPPPSRSSPKKVPPVVPKKNDNLKKKPPVVPKKKPLLKSLEPRPIEMERAYSGDISAADDNLNPFERYKRNVVPQEDDRLHKLK.

Disordered regions lie at residues Met-1–Asn-315, Met-341–Gly-795, Asn-818–Glu-893, and Ser-908–Lys-936. Over residues Ala-36 to Lys-54 the composition is skewed to basic residues. Ser-57, Ser-58, and Ser-64 each carry phosphoserine. Acidic residues predominate over residues Asp-59 to Met-68. Positions Glu-69–Lys-84 are enriched in basic and acidic residues. Composition is skewed to low complexity over residues Pro-93 to Gln-105 and Gln-130 to Pro-152. A compositionally biased stretch (polar residues) spans Gly-166 to Gly-244. Low complexity-rich tracts occupy residues Gln-245–Ser-267 and Gln-306–Asn-315. Residues Met-341–Tyr-354 show a composition bias toward polar residues. A compositionally biased stretch (pro residues) spans Gly-366–Pro-382. Residues Ile-453 to Ala-462 are compositionally biased toward polar residues. A Phosphoserine modification is found at Ser-463. 3 stretches are compositionally biased toward basic and acidic residues: residues Asp-475 to Thr-489, His-513 to Ser-528, and Glu-598 to Val-615. Low complexity-rich tracts occupy residues Gln-622 to Gln-632 and Ser-656 to Ser-665. Thr-718 is modified (phosphothreonine). Basic and acidic residues predominate over residues Asp-738 to Lys-748. Over residues Pro-752–Thr-763 the composition is skewed to polar residues. Phosphothreonine is present on Thr-850. Residues Pro-851 to Val-868 show a composition bias toward pro residues. Positions Lys-877–Leu-888 are enriched in basic residues.

This sequence belongs to the AIM3 family. Interacts with RVS167.

The protein localises to the membrane raft. The protein is Altered inheritance of mitochondria protein 3 (AIM3) of Saccharomyces cerevisiae (strain RM11-1a) (Baker's yeast).